The primary structure comprises 412 residues: Multifunctional CCA protein (412 aa).

ATP-binding residues include G8 and R11. CTP contacts are provided by G8 and R11. D21 and D23 together coordinate Mg(2+). R91, R137, and R140 together coordinate ATP. Residues R91, R137, and R140 each contribute to the CTP site. The 102-residue stretch at 228–329 (TGIHTLMTLS…VKLFDSIDAW (102 aa)) folds into the HD domain.

This sequence belongs to the tRNA nucleotidyltransferase/poly(A) polymerase family. Bacterial CCA-adding enzyme type 1 subfamily. Monomer. Can also form homodimers and oligomers. The cofactor is Mg(2+). Ni(2+) serves as cofactor.

The catalysed reaction is a tRNA precursor + 2 CTP + ATP = a tRNA with a 3' CCA end + 3 diphosphate. It carries out the reaction a tRNA with a 3' CCA end + 2 CTP + ATP = a tRNA with a 3' CCACCA end + 3 diphosphate. Its function is as follows. Catalyzes the addition and repair of the essential 3'-terminal CCA sequence in tRNAs without using a nucleic acid template. Adds these three nucleotides in the order of C, C, and A to the tRNA nucleotide-73, using CTP and ATP as substrates and producing inorganic pyrophosphate. tRNA 3'-terminal CCA addition is required both for tRNA processing and repair. Also involved in tRNA surveillance by mediating tandem CCA addition to generate a CCACCA at the 3' terminus of unstable tRNAs. While stable tRNAs receive only 3'-terminal CCA, unstable tRNAs are marked with CCACCA and rapidly degraded. This Escherichia coli (strain SMS-3-5 / SECEC) protein is Multifunctional CCA protein.